A 339-amino-acid chain; its full sequence is UDP-N-acetylenolpyruvoylglucosamine reductase (339 aa).

The FAD-binding PCMH-type domain maps to 18–189; that stretch reads GIDVKARYFS…LRVRFALTRT (172 aa). The active site involves R166. S239 acts as the Proton donor in catalysis. Residue E335 is part of the active site.

Belongs to the MurB family. Requires FAD as cofactor.

The protein localises to the cytoplasm. It carries out the reaction UDP-N-acetyl-alpha-D-muramate + NADP(+) = UDP-N-acetyl-3-O-(1-carboxyvinyl)-alpha-D-glucosamine + NADPH + H(+). It participates in cell wall biogenesis; peptidoglycan biosynthesis. In terms of biological role, cell wall formation. This Pseudomonas putida (strain ATCC 47054 / DSM 6125 / CFBP 8728 / NCIMB 11950 / KT2440) protein is UDP-N-acetylenolpyruvoylglucosamine reductase.